The sequence spans 178 residues: ATP-dependent protease subunit HslV (178 aa).

Residue Thr-5 is part of the active site. Na(+)-binding residues include Gly-161, Cys-164, and Thr-167.

The protein belongs to the peptidase T1B family. HslV subfamily. In terms of assembly, a double ring-shaped homohexamer of HslV is capped on each side by a ring-shaped HslU homohexamer. The assembly of the HslU/HslV complex is dependent on binding of ATP.

It is found in the cytoplasm. The catalysed reaction is ATP-dependent cleavage of peptide bonds with broad specificity.. Its activity is regulated as follows. Allosterically activated by HslU binding. Protease subunit of a proteasome-like degradation complex believed to be a general protein degrading machinery. The protein is ATP-dependent protease subunit HslV of Aliarcobacter butzleri (strain RM4018) (Arcobacter butzleri).